The chain runs to 175 residues: uncharacterized protein (175 aa).

It belongs to the asfivirus B175L family.

This is an uncharacterized protein from African swine fever virus (strain Badajoz 1971 Vero-adapted) (Ba71V).